The following is a 576-amino-acid chain: Potassium-transporting ATPase potassium-binding subunit (576 aa).

12 consecutive transmembrane segments (helical) span residues 4–24 (QAWI…WPLG), 65–85 (AYAL…YALQ), 136–156 (ALGV…FALI), 179–199 (VYVL…QGVI), 257–277 (LSNF…VFAF), 288–308 (GALL…VTSL), 341–361 (FGIA…CGAV), 371–391 (LGGA…GGVG), 393–413 (GLYG…LMIG), 430–450 (MTAV…AVAL), 497–517 (LLLA…VLAI), and 540–560 (LFVV…YVPA).

Belongs to the KdpA family. The system is composed of three essential subunits: KdpA, KdpB and KdpC.

The protein localises to the cell inner membrane. Its function is as follows. Part of the high-affinity ATP-driven potassium transport (or Kdp) system, which catalyzes the hydrolysis of ATP coupled with the electrogenic transport of potassium into the cytoplasm. This subunit binds the periplasmic potassium ions and delivers the ions to the membrane domain of KdpB through an intramembrane tunnel. The sequence is that of Potassium-transporting ATPase potassium-binding subunit from Methylibium petroleiphilum (strain ATCC BAA-1232 / LMG 22953 / PM1).